Consider the following 157-residue polypeptide: Protein Smg homolog (157 aa).

Belongs to the Smg family.

The polypeptide is Protein Smg homolog (Stenotrophomonas maltophilia (strain R551-3)).